The chain runs to 255 residues: Na(+)-translocating NADH-quinone reductase subunit C (255 aa).

The helical transmembrane segment at 11-31 (LGVVVGLSLVCSIIVSTAAVG) threads the bilayer. Thr223 is modified (FMN phosphoryl threonine).

Belongs to the NqrC family. As to quaternary structure, composed of six subunits; NqrA, NqrB, NqrC, NqrD, NqrE and NqrF. It depends on FMN as a cofactor.

It localises to the cell inner membrane. It catalyses the reaction a ubiquinone + n Na(+)(in) + NADH + H(+) = a ubiquinol + n Na(+)(out) + NAD(+). Functionally, NQR complex catalyzes the reduction of ubiquinone-1 to ubiquinol by two successive reactions, coupled with the transport of Na(+) ions from the cytoplasm to the periplasm. NqrA to NqrE are probably involved in the second step, the conversion of ubisemiquinone to ubiquinol. The protein is Na(+)-translocating NADH-quinone reductase subunit C of Vibrio vulnificus (strain CMCP6).